We begin with the raw amino-acid sequence, 141 residues long: Large ribosomal subunit protein uL11 (141 aa).

It belongs to the universal ribosomal protein uL11 family. As to quaternary structure, part of the ribosomal stalk of the 50S ribosomal subunit. Interacts with L10 and the large rRNA to form the base of the stalk. L10 forms an elongated spine to which L12 dimers bind in a sequential fashion forming a multimeric L10(L12)X complex. One or more lysine residues are methylated.

Functionally, forms part of the ribosomal stalk which helps the ribosome interact with GTP-bound translation factors. The protein is Large ribosomal subunit protein uL11 of Bacillus cereus (strain ATCC 10987 / NRS 248).